We begin with the raw amino-acid sequence, 118 residues long: Large ribosomal subunit protein uL18 (118 aa).

The interval 1-24 (MISKPDKNKIRQKRHRRVRGKLSG) is disordered. Residues 10–20 (IRQKRHRRVRG) are compositionally biased toward basic residues.

It belongs to the universal ribosomal protein uL18 family. Part of the 50S ribosomal subunit; part of the 5S rRNA/L5/L18/L25 subcomplex. Contacts the 5S and 23S rRNAs.

Functionally, this is one of the proteins that bind and probably mediate the attachment of the 5S RNA into the large ribosomal subunit, where it forms part of the central protuberance. The chain is Large ribosomal subunit protein uL18 from Streptococcus agalactiae serotype III (strain NEM316).